The following is a 621-amino-acid chain: Amino-acid acetyltransferase, mitochondrial (621 aa).

The transit peptide at 1-77 (MIPRAPPSTQ…RSYLASFGVQ (77 aa)) directs the protein to the mitochondrion. A disordered region spans residues 213–233 (PKPGSEEESEPGFSPPETHIY). Residues 424-600 (LPIRVVRSVS…GSAGLSFIED (177 aa)) form the N-acetyltransferase domain.

The protein belongs to the acetyltransferase family.

It is found in the mitochondrion. The enzyme catalyses L-glutamate + acetyl-CoA = N-acetyl-L-glutamate + CoA + H(+). Its pathway is amino-acid biosynthesis; L-arginine biosynthesis; N(2)-acetyl-L-ornithine from L-glutamate: step 1/4. Its function is as follows. N-acetylglutamate synthase involved in arginine biosynthesis. In Coprinopsis cinerea (strain Okayama-7 / 130 / ATCC MYA-4618 / FGSC 9003) (Inky cap fungus), this protein is Amino-acid acetyltransferase, mitochondrial (ARG2).